We begin with the raw amino-acid sequence, 115 residues long: Large ribosomal subunit protein bL19 (115 aa).

The protein belongs to the bacterial ribosomal protein bL19 family.

In terms of biological role, this protein is located at the 30S-50S ribosomal subunit interface and may play a role in the structure and function of the aminoacyl-tRNA binding site. This is Large ribosomal subunit protein bL19 from Oleidesulfovibrio alaskensis (strain ATCC BAA-1058 / DSM 17464 / G20) (Desulfovibrio alaskensis).